The primary structure comprises 294 residues: Phosphate acetyltransferase (294 aa).

Belongs to the phosphate acetyltransferase and butyryltransferase family. In terms of assembly, homotetramer.

It is found in the cytoplasm. It carries out the reaction acetyl-CoA + phosphate = acetyl phosphate + CoA. The protein operates within metabolic intermediate biosynthesis; acetyl-CoA biosynthesis; acetyl-CoA from acetate: step 2/2. In addition to acetyl-CoA (100%), the enzyme accepts propionyl-CoA (60%) and butyryl-CoA (30%). This chain is Phosphate acetyltransferase (pta), found in Thermotoga maritima (strain ATCC 43589 / DSM 3109 / JCM 10099 / NBRC 100826 / MSB8).